The sequence spans 202 residues: Urease accessory protein UreG (202 aa).

10 to 17 serves as a coordination point for GTP; the sequence is GPVGSGKT.

It belongs to the SIMIBI class G3E GTPase family. UreG subfamily. As to quaternary structure, homodimer. UreD, UreF and UreG form a complex that acts as a GTP-hydrolysis-dependent molecular chaperone, activating the urease apoprotein by helping to assemble the nickel containing metallocenter of UreC. The UreE protein probably delivers the nickel.

The protein localises to the cytoplasm. Functionally, facilitates the functional incorporation of the urease nickel metallocenter. This process requires GTP hydrolysis, probably effectuated by UreG. This chain is Urease accessory protein UreG, found in Synechococcus sp. (strain JA-3-3Ab) (Cyanobacteria bacterium Yellowstone A-Prime).